Here is a 245-residue protein sequence, read N- to C-terminus: tRNA1(Val) (adenine(37)-N6)-methyltransferase (245 aa).

It belongs to the methyltransferase superfamily. tRNA (adenine-N(6)-)-methyltransferase family.

The protein localises to the cytoplasm. It catalyses the reaction adenosine(37) in tRNA1(Val) + S-adenosyl-L-methionine = N(6)-methyladenosine(37) in tRNA1(Val) + S-adenosyl-L-homocysteine + H(+). Functionally, specifically methylates the adenine in position 37 of tRNA(1)(Val) (anticodon cmo5UAC). This Klebsiella pneumoniae (strain 342) protein is tRNA1(Val) (adenine(37)-N6)-methyltransferase.